Consider the following 403-residue polypeptide: Ubiquitin-like modifier-activating enzyme 5 (403 aa).

Residues G81, D102, K125, N148, and N182 each coordinate ATP. Residues C224 and C227 each coordinate Zn(2+). Residue C248 is the Glycyl thioester intermediate of the active site. 2 residues coordinate Zn(2+): C301 and C306. A UFM1-interacting sequence (UIS) motif is present at residues V333–V345. Residues S346–K376 are linker. 2 positions are modified to phosphoserine: S357 and S392. The short motif at D388–M403 is the UFC1-binding sequence (UFC) element.

This sequence belongs to the ubiquitin-activating E1 family. UBA5 subfamily. In terms of assembly, homodimer; homodimerization is required for UFM1 activation. Interacts (via UIS motif) with UFM1; binds UFM1 via a trans-binding mechanism in which UFM1 interacts with distinct sites in both subunits of the UBA5 homodimer. Interacts (via C-terminus) with UFC1. Interacts (via UIS motif) with GABARAPL2 and, with lower affinity, with GABARAP and GABARAPL1.

The protein localises to the cytoplasm. The protein resides in the nucleus. Its subcellular location is the endoplasmic reticulum membrane. It localises to the golgi apparatus. Its function is as follows. E1-like enzyme which specifically catalyzes the first step in ufmylation. Activates UFM1 by first adenylating its C-terminal glycine residue with ATP, and thereafter linking this residue to the side chain of a cysteine residue in E1, yielding a UFM1-E1 thioester and free AMP. Activates UFM1 via a trans-binding mechanism, in which UFM1 interacts with distinct sites in both subunits of the UBA5 homodimer. Trans-binding also promotes stabilization of the UBA5 homodimer, and enhances ATP-binding. Transfer of UFM1 from UBA5 to the E2-like enzyme UFC1 also takes place using a trans mechanism. Ufmylation plays a key role in various processes, such as ribosome recycling, response to DNA damage, interferon response or reticulophagy (also called ER-phagy). Ufmylation is essential for erythroid differentiation of both megakaryocytes and erythrocytes. This is Ubiquitin-like modifier-activating enzyme 5 from Mus musculus (Mouse).